We begin with the raw amino-acid sequence, 424 residues long: Subtilisin-like protease 2 (424 aa).

Positions 1–17 (MQLLNLGLLLLLPFVAG) are cleaved as a signal peptide. A propeptide spanning residues 18-123 (EIAPQPEPLR…VHPDQHVYLA (106 aa)) is cleaved from the precursor. The 87-residue stretch at 37 to 123 (QYIVTLKEGL…VHPDQHVYLA (87 aa)) folds into the Inhibitor I9 domain. A Peptidase S8 domain is found at 132 to 424 (RWGLGYMSSK…RKFTLPKNTK (293 aa)). Residues D170 and H202 each act as charge relay system in the active site. N-linked (GlcNAc...) asparagine glycosylation is found at N249, N262, and N350. S359 serves as the catalytic Charge relay system. N390 is a glycosylation site (N-linked (GlcNAc...) asparagine).

Belongs to the peptidase S8 family.

The protein resides in the secreted. Secreted subtilisin-like serine protease with keratinolytic activity that contributes to pathogenicity. The protein is Subtilisin-like protease 2 (SUB2) of Arthroderma otae (Microsporum canis).